We begin with the raw amino-acid sequence, 83 residues long: Mu-conotoxin-like PnMKLT1-014 (83 aa).

The N-terminal stretch at 1–22 (MNLTCMMIVAVLFLTAWTFVMA) is a signal peptide. The propeptide occupies 23-50 (DDSNNGLANLFSKSRYEMEDPEPSKLEK). 3 disulfide bridges follow: Cys54–Cys72, Cys61–Cys77, and Cys71–Cys82.

Belongs to the conotoxin O1 superfamily. In terms of tissue distribution, expressed by the venom duct.

The protein resides in the secreted. Its function is as follows. Mu-conotoxins block voltage-gated sodium channels (Nav). The sequence is that of Mu-conotoxin-like PnMKLT1-014 from Conus pennaceus (Feathered cone).